A 98-amino-acid polypeptide reads, in one-letter code: Serine protease inhibitor Kazal-type 14 (98 aa).

A signal peptide spans 1-23; the sequence is MVKYFQVLWSLLFSIMLHSMLLA. The Kazal-like domain maps to 35–98; sequence GLIKIKCPYK…QIRYYHTGRC (64 aa). 3 disulfides stabilise this stretch: C41/C80, C58/C77, and C66/C98. N-linked (GlcNAc...) asparagine glycosylation occurs at N52.

It localises to the secreted. Its function is as follows. May be a serine protease inhibitor. In Rattus norvegicus (Rat), this protein is Serine protease inhibitor Kazal-type 14 (Spink14).